Here is an 86-residue protein sequence, read N- to C-terminus: Small ribosomal subunit protein uS15 (86 aa).

It belongs to the universal ribosomal protein uS15 family. In terms of assembly, part of the 30S ribosomal subunit. Forms a bridge to the 50S subunit in the 70S ribosome, contacting the 23S rRNA.

Its function is as follows. One of the primary rRNA binding proteins, it binds directly to 16S rRNA where it helps nucleate assembly of the platform of the 30S subunit by binding and bridging several RNA helices of the 16S rRNA. Forms an intersubunit bridge (bridge B4) with the 23S rRNA of the 50S subunit in the ribosome. The sequence is that of Small ribosomal subunit protein uS15 from Mycoplasma pneumoniae (strain ATCC 29342 / M129 / Subtype 1) (Mycoplasmoides pneumoniae).